We begin with the raw amino-acid sequence, 301 residues long: NDP-polyphosphate phosphotransferase 3 (301 aa).

Basic and acidic residues predominate over residues 1–12 (MNRNGSTKDPRR). The interval 1-21 (MNRNGSTKDPRRMTGAATGEI) is disordered.

The protein belongs to the polyphosphate kinase 2 (PPK2) family. Class I subfamily. Requires Mg(2+) as cofactor.

The enzyme catalyses [phosphate](n) + ATP = [phosphate](n+1) + ADP. The catalysed reaction is [phosphate](n) + CTP = [phosphate](n+1) + CDP. It carries out the reaction [phosphate](n) + GTP = [phosphate](n+1) + GDP. It catalyses the reaction [phosphate](n) + UTP = [phosphate](n+1) + UDP. In terms of biological role, uses inorganic polyphosphate (polyP) as a donor to convert NDP to NTP. PolyP hydrolysis is slightly faster with UDP, but it can also use ADP, GDP and CDP. This Ruegeria pomeroyi (strain ATCC 700808 / DSM 15171 / DSS-3) (Silicibacter pomeroyi) protein is NDP-polyphosphate phosphotransferase 3.